We begin with the raw amino-acid sequence, 214 residues long: Transcriptional activator protein ExaE (214 aa).

A Response regulatory domain is found at 2-118; sequence GILLVDDHPM…VVLEAVRRVL (117 aa). Residue aspartate 53 is modified to 4-aspartylphosphate. Residues 143 to 208 form the HTH luxR-type domain; it reads GNARLQGLTQ…ELVHLAIEAG (66 aa). Positions 167 to 186 form a DNA-binding region, H-T-H motif; it reads TRLIAQQLCISAKTVSNYLT.

Its function is as follows. Positive regulator of the expression of the gene qedA and the activity of ADH I but does not affect the activities of ADH IIB or ADH IIG. In Pseudomonas putida (Arthrobacter siderocapsulatus), this protein is Transcriptional activator protein ExaE.